Consider the following 270-residue polypeptide: Putative pyruvate, phosphate dikinase regulatory protein 2 (270 aa).

151 to 158 (GVSRTSKT) is an ADP binding site.

The protein belongs to the pyruvate, phosphate/water dikinase regulatory protein family. PDRP subfamily.

It catalyses the reaction N(tele)-phospho-L-histidyl/L-threonyl-[pyruvate, phosphate dikinase] + ADP = N(tele)-phospho-L-histidyl/O-phospho-L-threonyl-[pyruvate, phosphate dikinase] + AMP + H(+). It carries out the reaction N(tele)-phospho-L-histidyl/O-phospho-L-threonyl-[pyruvate, phosphate dikinase] + phosphate + H(+) = N(tele)-phospho-L-histidyl/L-threonyl-[pyruvate, phosphate dikinase] + diphosphate. Functionally, bifunctional serine/threonine kinase and phosphorylase involved in the regulation of the pyruvate, phosphate dikinase (PPDK) by catalyzing its phosphorylation/dephosphorylation. The sequence is that of Putative pyruvate, phosphate dikinase regulatory protein 2 from Listeria monocytogenes serovar 1/2a (strain ATCC BAA-679 / EGD-e).